A 1680-amino-acid polypeptide reads, in one-letter code: MEDSAPDAVAAAPSGTPKSKLETLPREDLIKFAKKQMMLLQKAKARCTELDKEVEELKSKPVDGGTDDIIKVLTERLDALLLEKAETEQQCLCLKKENVKMKQEVEDSVTKLEETHKEFEQSHRNYVKEIESCKNELMAVHSEHSKETAILQKELEEAVHKQVELREQLKSQSDSEDNVRKLQEEIQNITAAFEEQISCLEKKLEATSDEKQQEIIHLQKVIEDKAQHYQKDINTFQAEILQLRATHKEEVTELMSQIETSAKEHEAEINKLKENRVTQCEASENIPEKYQCESENLNEVASDASPESQNCSVALQEDPSAEQTVCDKVRQLEDSLKELESQHSILKDEVTYMNNLKLKLEMDAQHIKDEFFHEREDLEFKINELLLAKEEQGYVVEKLKYEREDLNRQLCCAVEQHNKEIQRLQEHHQKEVSELSETFISGSEKEKLALMFEIQGLKEQCENLQHEKQEVVLNYESLREMMEILQTELGESAGKISQEFETMKQQQASDVHELQQKLRSAFNEKDALLETVNRLQGENEKLLSQQELVPELESTIKNLQADNSMYLASLGQKDTMLQELEAKISSLAKEKDDFISKIKTSHEEMDDLHQKWEREQRLSVELREAAGQAAQHNSELRQRVSELTGKLDELVREKSQNDQSITVQMKTMTEDQEALSSKIKSLYEENNRLHSEKAQLSRDLEALQAQQDFAHKEHVAEFEKKLQLMVEERDDLNKLLENEQVQKSFVKTQLYEYLKQLRASILEENEEEDVVKLIQAVGESLVKVKEEEHNLVFEYDARVLELENKIKCLQEDSAVQCEELRTLVRDSEQEKILLRKELDAVTSAKEALQLDLLEMKNTNEKASLENQTLSTQVEELSQTLHSRNEVHDEKVLVIEHENLRLLLKQRESELQDVRAELILLKDSLEKSPSVKNDQLSLVKELEEKIESLEKESKDKDEKISKIKLVAVKAKKELDSNRKEAQTLREELESVRSEKDRLSASMKEFLQGAESYKSLLLEYDKQSEQLDVEKERAHNFERHIEDLTKQLRNSTCQYERLTSDNEDLLARIETLQANAKLLEAQILEVQKAKGVVEKELDAEKLQKEQKIKEHVSTVNELEELQLQFQKEKKQLQKTMQELELVKKDAQQTTLMNMEIADYERLMKELNQKLTNKNSTIEDLEQEMKIQKEKQETLQEEITSLQSSVQHYEEKNTKIKQLLVKTKKELADAKQAETDHLLLQASLKGELEASQQQVEVYKIQLAEMTSEKHKIHEHLKTSAEQHQRTLSAYQQRVVALQEESRAAKAEQAAVTSEFESYKVRVHNVLKQQKNKSVSQVETEGAKQEREHLEMLIDQLKIKLQDSQNSLQISVSEYQTLQAEHDTLLERHNRMLQETVTKEAELREKLCSVQSENTMMKSEHSQTMCQLTSQNEALRTSFRDQVRHLQDEHRKTVETLQHQLSKLEAQLFQLKSEPSTRSPASSHQPSKSLRERRTTDLPLLDMHTVAREEGEGMETTDSESVSSAGTHIQSLEQLLSSPDTKLERLAETSLWHNEFTKEELAEKLSSTTKSADHLNGLLRETEATNAILMEQIKLLKSEIRRLERNQEREKSVANLEYLKNVLLRFIFLKPGSERERLLPVIDTMLQLSPEEKGKLATVAQGEEESASRSSGWASYLHSWSGLR.

Met1 carries the N-acetylmethionine modification. The span at 1–14 (MEDSAPDAVAAAPS) shows a compositional bias: low complexity. 2 disordered regions span residues 1-23 (MEDS…KLET) and 1468-1522 (KSEP…SSAG). Residues 31 to 1614 (KFAKKQMMLL…REKSVANLEY (1584 aa)) adopt a coiled-coil conformation. Over residues 1469–1484 (SEPSTRSPASSHQPSK) the composition is skewed to polar residues. A phosphoserine mark is found at Ser1475 and Ser1479. The mediates interaction with RAB6A stretch occupies residues 1570 to 1609 (HLNGLLRETEATNAILMEQIKLLKSEIRRLERNQEREKSV). Positions 1570-1680 (HLNGLLRETE…SYLHSWSGLR (111 aa)) are mediates interaction with RAB9A. The 51-residue stretch at 1605–1655 (REKSVANLEYLKNVLLRFIFLKPGSERERLLPVIDTMLQLSPEEKGKLATV) folds into the GRIP domain.

Homodimer. Interacts (via GRIP domain) with RAB6A (preferentially in its GTP-bound form). May interact (RAB6A-dependent) with ARL1; might be involved in GCC2 Golgi localization. Interacts (probably via GRIP domain) with RAB9A (preferentially in its GTP-bound form). Interacts with CLASP1 and CLASP2; recruits both proteins to membranes of the TGN. Interacts with STX16.

It localises to the cytoplasm. The protein resides in the golgi apparatus. It is found in the trans-Golgi network membrane. Golgin which probably tethers transport vesicles to the trans-Golgi network (TGN) and regulates vesicular transport between the endosomes and the Golgi. As a RAB9A effector it is involved in recycling of the mannose 6-phosphate receptor from the late endosomes to the TGN. May also play a role in transport between the recycling endosomes and the Golgi. Required for maintenance of the Golgi structure, it is involved in the biogenesis of noncentrosomal, Golgi-associated microtubules through recruitment of CLASP1 and CLASP2. The polypeptide is GRIP and coiled-coil domain-containing protein 2 (Gcc2) (Mus musculus (Mouse)).